The following is a 414-amino-acid chain: DNA polymerase IV (414 aa).

Residues 8–189 enclose the UmuC domain; it reads IFHIDMNSFY…LPIEEMHGIG (182 aa). The Mg(2+) site is built by Asp12 and Asp108. The active site involves Glu109. Residues 394-414 form a disordered region; the sequence is EESKTRGTSFNRDFFQDEKKR.

This sequence belongs to the DNA polymerase type-Y family. Monomer. Mg(2+) serves as cofactor.

The protein localises to the cytoplasm. It catalyses the reaction DNA(n) + a 2'-deoxyribonucleoside 5'-triphosphate = DNA(n+1) + diphosphate. Poorly processive, error-prone DNA polymerase involved in untargeted mutagenesis. Copies undamaged DNA at stalled replication forks, which arise in vivo from mismatched or misaligned primer ends. These misaligned primers can be extended by PolIV. Exhibits no 3'-5' exonuclease (proofreading) activity. May be involved in translesional synthesis, in conjunction with the beta clamp from PolIII. This is DNA polymerase IV from Bacillus velezensis (strain DSM 23117 / BGSC 10A6 / LMG 26770 / FZB42) (Bacillus amyloliquefaciens subsp. plantarum).